The primary structure comprises 173 residues: MKISEYTKEMMDENSFIDLAYMALSEKGKEVNLYELIDEFKAIGNYSDEEVETRVVQFYTDLNTDGRFLSTGEYMWGLRDWYSVDDIEEKIAPTVQKFDILDEEDEDSPKIALLGEDEVEDELDLLPSDGDEENVDTEDEEVEDELDEAGLVVEPDEEFEDEEDEFDDEEEEE.

Residues 14–81 (NSFIDLAYMA…GEYMWGLRDW (68 aa)) enclose the HTH HARE-type domain. Positions 113–173 (LLGEDEVEDE…DEFDDEEEEE (61 aa)) are disordered. A compositionally biased stretch (acidic residues) spans 115–173 (GEDEVEDELDLLPSDGDEENVDTEDEEVEDELDEAGLVVEPDEEFEDEEDEFDDEEEEE).

It belongs to the RpoE family. In terms of assembly, RNAP is composed of a core of 2 alpha, a beta and a beta' subunits. The core is associated with a delta subunit and one of several sigma factors.

In terms of biological role, participates in both the initiation and recycling phases of transcription. In the presence of the delta subunit, RNAP displays an increased specificity of transcription, a decreased affinity for nucleic acids, and an increased efficiency of RNA synthesis because of enhanced recycling. The sequence is that of Probable DNA-directed RNA polymerase subunit delta from Macrococcus caseolyticus (strain JCSC5402) (Macrococcoides caseolyticum).